The primary structure comprises 510 residues: Cobyric acid synthase (510 aa).

The GATase cobBQ-type domain maps to 249–458 (CFKVRVLVYP…LHGLFDSPDA (210 aa)). Cysteine 336 acts as the Nucleophile in catalysis. Residue histidine 450 is part of the active site.

It belongs to the CobB/CobQ family. CobQ subfamily.

It participates in cofactor biosynthesis; adenosylcobalamin biosynthesis. Its function is as follows. Catalyzes amidations at positions B, D, E, and G on adenosylcobyrinic A,C-diamide. NH(2) groups are provided by glutamine, and one molecule of ATP is hydrogenolyzed for each amidation. This chain is Cobyric acid synthase, found in Shewanella oneidensis (strain ATCC 700550 / JCM 31522 / CIP 106686 / LMG 19005 / NCIMB 14063 / MR-1).